The chain runs to 576 residues: (E,E)-alpha-farnesene synthase (576 aa).

Positions 289, 326, 330, 468, and 471 each coordinate (2E,6E)-farnesyl diphosphate. Mg(2+)-binding residues include Asp-326 and Asp-330. Positions 326–330 (DDVYD) match the DDXXD motif motif. Mg(2+) contacts are provided by Asn-471, Thr-475, and Glu-479. Residues Asp-484 and Ser-487 each contribute to the K(+) site.

It belongs to the terpene synthase family. Tpsb subfamily. As to quaternary structure, monomer. It depends on Mg(2+) as a cofactor. Mn(2+) serves as cofactor. The cofactor is K(+).

It is found in the cytoplasm. It catalyses the reaction (2E,6E)-farnesyl diphosphate = (3E,6E)-alpha-farnesene + diphosphate. In terms of biological role, sesquiterpene synthase catalyzing the production of (E,E)-alpha-farnesene, the predominant terpene produced during storage of fruits. Produces all six isomers (E,E)-alpha-farnesene, (Z,E)-alpha-farnesene, (E,Z)-alpha-farnesene, (Z,Z)-alpha-farnesene, (E)-beta-farnesene and (Z)-beta-farnesene from a mix of isomeric forms of the farnesyl diphosphate precursor. Able to convert geranyl diphosphate to the monoterpenes (E)-beta-ocimene, linalool and beta-myrcene. Also has a prenyltransferase activity producing alpha-farnesene directly from geranyl diphosphate and isoprenyl diphosphate. This Malus domestica (Apple) protein is (E,E)-alpha-farnesene synthase (AFS1).